A 94-amino-acid polypeptide reads, in one-letter code: MTAERNLRKTRVGVVTSDKMDKTVVVAVETLVQHPLYKKRVRRTKKFKAHDEHNQCKVGDKVRIMETRPLSKEKRWRVVEIIESAPDYKSAPEV.

The protein belongs to the universal ribosomal protein uS17 family. As to quaternary structure, part of the 30S ribosomal subunit.

Its function is as follows. One of the primary rRNA binding proteins, it binds specifically to the 5'-end of 16S ribosomal RNA. This Symbiobacterium thermophilum (strain DSM 24528 / JCM 14929 / IAM 14863 / T) protein is Small ribosomal subunit protein uS17.